The chain runs to 335 residues: Methionine import ATP-binding protein MetN (335 aa).

Residues 2–241 (IQFKDSYKHY…PQHPTTRSFV (240 aa)) enclose the ABC transporter domain. 38-45 (GHSGAGKS) provides a ligand contact to ATP.

The protein belongs to the ABC transporter superfamily. Methionine importer (TC 3.A.1.24) family. The complex is composed of two ATP-binding proteins (MetN), two transmembrane proteins (MetI) and a solute-binding protein (MetQ).

The protein resides in the cell inner membrane. It carries out the reaction L-methionine(out) + ATP + H2O = L-methionine(in) + ADP + phosphate + H(+). It catalyses the reaction D-methionine(out) + ATP + H2O = D-methionine(in) + ADP + phosphate + H(+). Its function is as follows. Part of the ABC transporter complex MetNIQ involved in methionine import. Responsible for energy coupling to the transport system. This is Methionine import ATP-binding protein MetN from Xylella fastidiosa (strain Temecula1 / ATCC 700964).